The following is a 323-amino-acid chain: Elongation factor P--(R)-beta-lysine ligase (323 aa).

74–76 (SPE) serves as a coordination point for substrate. Residues 98-100 (RNE) and Asn-107 each bind ATP. Tyr-116 contributes to the substrate binding site. 242-243 (EL) is an ATP binding site. Glu-249 contacts substrate. Gly-298 is a binding site for ATP.

This sequence belongs to the class-II aminoacyl-tRNA synthetase family. EpmA subfamily. Homodimer.

The catalysed reaction is D-beta-lysine + L-lysyl-[protein] + ATP = N(6)-((3R)-3,6-diaminohexanoyl)-L-lysyl-[protein] + AMP + diphosphate + H(+). Its function is as follows. With EpmB is involved in the beta-lysylation step of the post-translational modification of translation elongation factor P (EF-P). Catalyzes the ATP-dependent activation of (R)-beta-lysine produced by EpmB, forming a lysyl-adenylate, from which the beta-lysyl moiety is then transferred to the epsilon-amino group of a conserved specific lysine residue in EF-P. The chain is Elongation factor P--(R)-beta-lysine ligase from Vibrio atlanticus (strain LGP32) (Vibrio splendidus (strain Mel32)).